The primary structure comprises 199 residues: Gene 66 protein (199 aa).

This chain is Gene 66 protein (66), found in Mycobacterium (Mycobacteriophage D29).